The sequence spans 256 residues: Probable succinate transporter subunit YjjP (256 aa).

Residues 1–113 lie on the Cytoplasmic side of the membrane; sequence MQTEQQRAVT…KRFSQIQPLR (113 aa). A helical transmembrane segment spans residues 114–135; sequence YPRWLVALMVGLSCACFCKLNN. Over 136–140 the chain is Periplasmic; it reads GGWDG. A helical membrane pass occupies residues 141 to 158; sequence AVITFFASTTAMYIRQLL. Residues 159 to 168 lie on the Cytoplasmic side of the membrane; that stretch reads AQRHLHPQIN. Residues 169-189 traverse the membrane as a helical segment; it reads FCLTAFAATTISGLLLQLPTF. At 190–194 the chain is on the periplasmic side; it reads SNTPT. A helical transmembrane segment spans residues 195–215; the sequence is IAMAASVLLLVPGFPLINAVA. The Cytoplasmic portion of the chain corresponds to 216–228; it reads DMFKGHINTGLAR. Residues 229-249 traverse the membrane as a helical segment; that stretch reads WAIASLLTLATCVGVVMALTI. Topologically, residues 250-256 are periplasmic; the sequence is WGLRGWV.

The protein belongs to the ThrE exporter (TC 2.A.79) family. As to quaternary structure, the transporter is composed of YjjB and YjjP.

It localises to the cell inner membrane. Functionally, involved in succinate export with YjjB. Both proteins are required for export. Contributes to succinate production under both aerobic and anaerobic conditions. This chain is Probable succinate transporter subunit YjjP (yjjP), found in Escherichia coli (strain K12).